Consider the following 328-residue polypeptide: Phosphate acyltransferase (328 aa).

The protein belongs to the PlsX family. As to quaternary structure, homodimer. Probably interacts with PlsY.

It is found in the cytoplasm. The enzyme catalyses a fatty acyl-[ACP] + phosphate = an acyl phosphate + holo-[ACP]. Its pathway is lipid metabolism; phospholipid metabolism. Its function is as follows. Catalyzes the reversible formation of acyl-phosphate (acyl-PO(4)) from acyl-[acyl-carrier-protein] (acyl-ACP). This enzyme utilizes acyl-ACP as fatty acyl donor, but not acyl-CoA. The protein is Phosphate acyltransferase of Mycoplasma genitalium (strain ATCC 33530 / DSM 19775 / NCTC 10195 / G37) (Mycoplasmoides genitalium).